We begin with the raw amino-acid sequence, 36 residues long: MTIEKHERSTKDLVKAAVSGWLGTALEFMDFKSHAC.

In Escherichia coli (strain K12), this protein is Protein YnfP.